The sequence spans 710 residues: Prolyl endopeptidase (710 aa).

At methionine 1 the chain carries N-acetylmethionine. At lysine 157 the chain carries N6-acetyllysine. Active-site charge relay system residues include serine 554, aspartate 641, and histidine 680.

The protein belongs to the peptidase S9A family. Expressed in all tissues tested: uterus, kidney, heart, lung, small intestine, smooth muscle, liver, spleen, thymus, adrenal, pituitary and whole brain.

The protein localises to the cytoplasm. The enzyme catalyses Hydrolysis of Pro-|-Xaa &gt;&gt; Ala-|-Xaa in oligopeptides.. With respect to regulation, inhibited by DFP, Z-Pro-prolinal and poststatin, but not by PMSF, SBTI, EDTA, leupeptin, E-64 and pepstatin. Cleaves peptide bonds on the C-terminal side of prolyl residues within peptides that are up to approximately 30 amino acids long. Has high activity on the succinyl- (suc-) peptide-4-methylcoumaryl-7-amide (MCA) substrates suc-Gly-Pro-Leu-Gly-Pro-MCA, suc-Gly-Pro-MCA and suc-Ala-Ala-Ala-MCA. This Rattus norvegicus (Rat) protein is Prolyl endopeptidase.